Consider the following 96-residue polypeptide: Pyrimidine/purine nucleoside phosphorylase (96 aa).

Belongs to the nucleoside phosphorylase PpnP family.

The catalysed reaction is a purine D-ribonucleoside + phosphate = a purine nucleobase + alpha-D-ribose 1-phosphate. It catalyses the reaction adenosine + phosphate = alpha-D-ribose 1-phosphate + adenine. It carries out the reaction cytidine + phosphate = cytosine + alpha-D-ribose 1-phosphate. The enzyme catalyses guanosine + phosphate = alpha-D-ribose 1-phosphate + guanine. The catalysed reaction is inosine + phosphate = alpha-D-ribose 1-phosphate + hypoxanthine. It catalyses the reaction thymidine + phosphate = 2-deoxy-alpha-D-ribose 1-phosphate + thymine. It carries out the reaction uridine + phosphate = alpha-D-ribose 1-phosphate + uracil. The enzyme catalyses xanthosine + phosphate = alpha-D-ribose 1-phosphate + xanthine. Catalyzes the phosphorolysis of diverse nucleosides, yielding D-ribose 1-phosphate and the respective free bases. Can use uridine, adenosine, guanosine, cytidine, thymidine, inosine and xanthosine as substrates. Also catalyzes the reverse reactions. The sequence is that of Pyrimidine/purine nucleoside phosphorylase from Erwinia tasmaniensis (strain DSM 17950 / CFBP 7177 / CIP 109463 / NCPPB 4357 / Et1/99).